Reading from the N-terminus, the 133-residue chain is Large ribosomal subunit protein uL16c (133 aa).

This sequence belongs to the universal ribosomal protein uL16 family. Part of the 50S ribosomal subunit.

It localises to the plastid. In Euglena longa (Euglenophycean alga), this protein is Large ribosomal subunit protein uL16c.